We begin with the raw amino-acid sequence, 759 residues long: Mitogen-activated protein kinase kinase kinase 1a (759 aa).

Basic and acidic residues-rich tracts occupy residues Met1 to Ser17, Ser25 to Lys36, and Ala52 to Ser64. 4 disordered regions span residues Met1–Lys90, Leu122–Phe160, Ser165–Met184, and Arg195–Leu239. Low complexity predominate over residues Val72–Ser85. The Protein kinase domain occupies Trp426–Ile679. ATP-binding positions include Leu432–Val440 and Lys454. The Proton acceptor role is filled by Asp549.

The protein belongs to the protein kinase superfamily. STE Ser/Thr protein kinase family. MAP kinase kinase kinase subfamily.

It is found in the cell membrane. The enzyme catalyses L-seryl-[protein] + ATP = O-phospho-L-seryl-[protein] + ADP + H(+). It carries out the reaction L-threonyl-[protein] + ATP = O-phospho-L-threonyl-[protein] + ADP + H(+). In terms of biological role, the CERK1, MEKK1a/b, MKK1a/b/c and MPK4a/b proteins are involved in pathogen defense. The pathway induces rapid growth inhibition, cell wall depositions and accumulation of defense-related transcripts. This protein is required for responses to chitin and acts redundantly with MEKK1b. This Physcomitrium patens (Spreading-leaved earth moss) protein is Mitogen-activated protein kinase kinase kinase 1a.